The primary structure comprises 1087 residues: Fanconi-associated nuclease 1 homolog (1087 aa).

Disordered stretches follow at residues 1–79 (MKSN…TPIK), 104–154 (FQKA…PNNL), 169–202 (EFLL…NNIT), 459–486 (TQNS…NNNI), 816–835 (ITSD…EKEN), and 842–871 (SVKK…EEEI). The segment covering 41–79 (TTTPPKTPTQPIRFTQNNNKENDKSNNNNNNNNTITPIK) has biased composition (low complexity). Over residues 104–115 (FQKASTPSSPQI) the composition is skewed to polar residues. Low complexity-rich tracts occupy residues 118–154 (KLPQ…PNNL), 182–202 (NTTT…NNIT), and 467–485 (NNNN…NNNN). Coiled coils occupy residues 419-490 (WKSK…KEYD) and 830-874 (KIEK…IIEI). Residues 848–871 (EQEEEEEEEEEGQGQEEEEEEEEI) are compositionally biased toward acidic residues. Mn(2+) contacts are provided by E899, D1023, E1051, and V1052. In terms of domain architecture, VRR-NUC spans 961 to 1083 (DDLLILLNQS…GCDVEVCLVK (123 aa)).

This sequence belongs to the FAN1 family. It depends on Mn(2+) as a cofactor. Mg(2+) serves as cofactor.

It catalyses the reaction Hydrolytically removes 5'-nucleotides successively from the 3'-hydroxy termini of 3'-hydroxy-terminated oligonucleotides.. Functionally, nuclease required for the repair of DNA interstrand cross-links (ICL). Acts as a 5'-3' exonuclease that anchors at a cut end of DNA and cleaves DNA successively at every third nucleotide, allowing to excise an ICL from one strand through flanking incisions. The chain is Fanconi-associated nuclease 1 homolog (mtmr15) from Dictyostelium discoideum (Social amoeba).